A 234-amino-acid polypeptide reads, in one-letter code: 2,3-bisphosphoglycerate-dependent phosphoglycerate mutase (234 aa).

Residues 8–15, 21–22, Arg-60, 87–90, Lys-98, 114–115, and 183–184 each bind substrate; these read RHGESVWN, TG, ERHY, RR, and GN. Catalysis depends on His-9, which acts as the Tele-phosphohistidine intermediate. The active-site Proton donor/acceptor is the Glu-87.

The protein belongs to the phosphoglycerate mutase family. BPG-dependent PGAM subfamily. Homodimer.

The catalysed reaction is (2R)-2-phosphoglycerate = (2R)-3-phosphoglycerate. It participates in carbohydrate degradation; glycolysis; pyruvate from D-glyceraldehyde 3-phosphate: step 3/5. Its function is as follows. Catalyzes the interconversion of 2-phosphoglycerate and 3-phosphoglycerate. In Citrifermentans bemidjiense (strain ATCC BAA-1014 / DSM 16622 / JCM 12645 / Bem) (Geobacter bemidjiensis), this protein is 2,3-bisphosphoglycerate-dependent phosphoglycerate mutase.